The sequence spans 251 residues: Aspartate/glutamate leucyltransferase (251 aa).

The protein belongs to the R-transferase family. Bpt subfamily.

It localises to the cytoplasm. It carries out the reaction N-terminal L-glutamyl-[protein] + L-leucyl-tRNA(Leu) = N-terminal L-leucyl-L-glutamyl-[protein] + tRNA(Leu) + H(+). It catalyses the reaction N-terminal L-aspartyl-[protein] + L-leucyl-tRNA(Leu) = N-terminal L-leucyl-L-aspartyl-[protein] + tRNA(Leu) + H(+). In terms of biological role, functions in the N-end rule pathway of protein degradation where it conjugates Leu from its aminoacyl-tRNA to the N-termini of proteins containing an N-terminal aspartate or glutamate. The chain is Aspartate/glutamate leucyltransferase from Xanthomonas axonopodis pv. citri (strain 306).